A 360-amino-acid chain; its full sequence is Carbamoyl phosphate synthase small chain (360 aa).

Residues 1–169 (MTKRLLILED…TKTAYPAPGI (169 aa)) are CPSase. Ser-46, Gly-220, and Gly-222 together coordinate L-glutamine. The 187-residue stretch at 172-358 (NIVLVDFGLK…LEMIDSWRCT (187 aa)) folds into the Glutamine amidotransferase type-1 domain. The Nucleophile role is filled by Cys-247. The L-glutamine site is built by Met-248, Gln-251, Asn-289, Gly-291, and Tyr-292. Residues His-331 and Asp-333 contribute to the active site.

The protein belongs to the CarA family. As to quaternary structure, composed of two chains; the small (or glutamine) chain promotes the hydrolysis of glutamine to ammonia, which is used by the large (or ammonia) chain to synthesize carbamoyl phosphate. Tetramer of heterodimers (alpha,beta)4.

It carries out the reaction hydrogencarbonate + L-glutamine + 2 ATP + H2O = carbamoyl phosphate + L-glutamate + 2 ADP + phosphate + 2 H(+). It catalyses the reaction L-glutamine + H2O = L-glutamate + NH4(+). It participates in amino-acid biosynthesis; L-arginine biosynthesis; carbamoyl phosphate from bicarbonate: step 1/1. The protein operates within pyrimidine metabolism; UMP biosynthesis via de novo pathway; (S)-dihydroorotate from bicarbonate: step 1/3. In terms of biological role, small subunit of the glutamine-dependent carbamoyl phosphate synthetase (CPSase). CPSase catalyzes the formation of carbamoyl phosphate from the ammonia moiety of glutamine, carbonate, and phosphate donated by ATP, constituting the first step of 2 biosynthetic pathways, one leading to arginine and/or urea and the other to pyrimidine nucleotides. The small subunit (glutamine amidotransferase) binds and cleaves glutamine to supply the large subunit with the substrate ammonia. The chain is Carbamoyl phosphate synthase small chain from Streptococcus pyogenes serotype M18 (strain MGAS8232).